The following is a 204-amino-acid chain: Large ribosomal subunit protein eL15 (204 aa).

It belongs to the eukaryotic ribosomal protein eL15 family. In terms of assembly, component of the large ribosomal subunit.

The protein localises to the cytoplasm. In terms of biological role, component of the large ribosomal subunit. The ribosome is a large ribonucleoprotein complex responsible for the synthesis of proteins in the cell. This Paramisgurnus dabryanus protein is Large ribosomal subunit protein eL15 (rpl15).